The primary structure comprises 115 residues: Integration host factor subunit alpha (115 aa).

It belongs to the bacterial histone-like protein family. Heterodimer of an alpha and a beta chain.

This protein is one of the two subunits of integration host factor, a specific DNA-binding protein that functions in genetic recombination as well as in transcriptional and translational control. The protein is Integration host factor subunit alpha of Burkholderia pseudomallei (strain K96243).